Consider the following 105-residue polypeptide: U-scoloptoxin(05)-Ssd1a (105 aa).

Positions 1 to 24 are cleaved as a signal peptide; the sequence is MKEAVKMSCLCIFVFLFLFSLTDA. The segment at 79-105 is disordered; that stretch reads HVPESNQKDGKVSTHMSSCNTDGCNAN. Residues 92–105 are compositionally biased toward polar residues; that stretch reads THMSSCNTDGCNAN.

It belongs to the scoloptoxin-05 family. In terms of processing, contains 4 disulfide bonds. As to expression, expressed by the venom gland.

It is found in the secreted. This Scolopendra dehaani (Thai centipede) protein is U-scoloptoxin(05)-Ssd1a.